Reading from the N-terminus, the 236-residue chain is MRRILSILVFAIMLAGCSSNASTEKQHAGGEKTVKAEPQSTSSQKDSTDDYQPNSQVTDDRTLHKVGQTFSDDKGKAVLKDIKQVNKTYKIGDVELTVKEMKLIHLRPDYSMIDYFHELTHDEEFDFVKVFVDIKNTSTKKVNVAPIALMKTNTGETFDWNKDIYLEELNGELEGGAEKSGNLGFIVNASSGHAHDKAADAEKKTKEIKWIEITTSDVFDHNHKKISDAQKIKIKF.

A signal peptide spans 1 to 23 (MRRILSILVFAIMLAGCSSNAST). The tract at residues 22–62 (STEKQHAGGEKTVKAEPQSTSSQKDSTDDYQPNSQVTDDRT) is disordered. Over residues 24–35 (EKQHAGGEKTVK) the composition is skewed to basic and acidic residues.

This is an uncharacterized protein from Bacillus subtilis (strain 168).